Consider the following 863-residue polypeptide: Bifunctional uridylyltransferase/uridylyl-removing enzyme (863 aa).

Positions 1 to 328 (MLFSPTLSSL…SSNQDTVIDQ (328 aa)) are uridylyltransferase. A uridylyl-removing region spans residues 329-687 (LDDDFQLINQ…ISNRFSLGGT (359 aa)). One can recognise an HD domain in the interval 446–568 (VDEHTLRVML…MQNQVRLDYL (123 aa)). ACT domains lie at 688-764 (EVFI…KLPA) and 794-863 (EMEL…QQIR).

It belongs to the GlnD family. The cofactor is Mg(2+).

The enzyme catalyses [protein-PII]-L-tyrosine + UTP = [protein-PII]-uridylyl-L-tyrosine + diphosphate. It catalyses the reaction [protein-PII]-uridylyl-L-tyrosine + H2O = [protein-PII]-L-tyrosine + UMP + H(+). With respect to regulation, uridylyltransferase (UTase) activity is inhibited by glutamine, while glutamine activates uridylyl-removing (UR) activity. Functionally, modifies, by uridylylation and deuridylylation, the PII regulatory proteins (GlnB and homologs), in response to the nitrogen status of the cell that GlnD senses through the glutamine level. Under low glutamine levels, catalyzes the conversion of the PII proteins and UTP to PII-UMP and PPi, while under higher glutamine levels, GlnD hydrolyzes PII-UMP to PII and UMP (deuridylylation). Thus, controls uridylylation state and activity of the PII proteins, and plays an important role in the regulation of nitrogen assimilation and metabolism. The sequence is that of Bifunctional uridylyltransferase/uridylyl-removing enzyme from Haemophilus influenzae (strain ATCC 51907 / DSM 11121 / KW20 / Rd).